Reading from the N-terminus, the 279-residue chain is Bifunctional protein FolD (279 aa).

NADP(+) is bound by residues 159–161, S184, and T225; that span reads GRS.

The protein belongs to the tetrahydrofolate dehydrogenase/cyclohydrolase family. In terms of assembly, homodimer.

It carries out the reaction (6R)-5,10-methylene-5,6,7,8-tetrahydrofolate + NADP(+) = (6R)-5,10-methenyltetrahydrofolate + NADPH. The catalysed reaction is (6R)-5,10-methenyltetrahydrofolate + H2O = (6R)-10-formyltetrahydrofolate + H(+). It participates in one-carbon metabolism; tetrahydrofolate interconversion. Functionally, catalyzes the oxidation of 5,10-methylenetetrahydrofolate to 5,10-methenyltetrahydrofolate and then the hydrolysis of 5,10-methenyltetrahydrofolate to 10-formyltetrahydrofolate. The sequence is that of Bifunctional protein FolD from Methanospirillum hungatei JF-1 (strain ATCC 27890 / DSM 864 / NBRC 100397 / JF-1).